The sequence spans 210 residues: Chaperone protein TorD (210 aa).

This sequence belongs to the TorD/DmsD family. TorD subfamily.

Its subcellular location is the cytoplasm. In terms of biological role, involved in the biogenesis of TorA. Acts on TorA before the insertion of the molybdenum cofactor and, as a result, probably favors a conformation of the apoenzyme that is competent for acquiring the cofactor. This is Chaperone protein TorD from Salmonella paratyphi B (strain ATCC BAA-1250 / SPB7).